Consider the following 414-residue polypeptide: Mannan endo-1,4-beta-mannosidase 3 (414 aa).

An N-terminal signal peptide occupies residues 1–19 (MKCLCFVVLLAILIAQNSS). N17 and N75 each carry an N-linked (GlcNAc...) asparagine glycan. W87 contacts substrate. N-linked (GlcNAc...) asparagine glycosylation is found at N133 and N153. Residue N202 participates in substrate binding. E203 acts as the Proton donor in catalysis. Residue Y283 participates in substrate binding. E323 functions as the Nucleophile in the catalytic mechanism. An N-linked (GlcNAc...) asparagine glycan is attached at N343. Substrate is bound at residue W365. N-linked (GlcNAc...) asparagine glycosylation is present at N386.

This sequence belongs to the glycosyl hydrolase 5 (cellulase A) family. Expressed in leaves, flowers, siliques and seeds.

It is found in the secreted. It catalyses the reaction Random hydrolysis of (1-&gt;4)-beta-D-mannosidic linkages in mannans, galactomannans and glucomannans.. The polypeptide is Mannan endo-1,4-beta-mannosidase 3 (MAN3) (Arabidopsis thaliana (Mouse-ear cress)).